The following is a 578-amino-acid chain: Alpha-(1,6)-fucosyltransferase (578 aa).

At 1–9 (MRPWTGSWR) the chain is on the cytoplasmic side. A helical; Signal-anchor for type II membrane protein transmembrane segment spans residues 10–30 (WIMLILFAWGTLLFYIGGHLV). The Lumenal portion of the chain corresponds to 31-578 (RDNENPDHSS…KYPTYQEAEK (548 aa)). Cystine bridges form between Cys-207/Cys-269, Cys-215/Cys-233, and Cys-221/Cys-225. In terms of domain architecture, GT23 spans 209–496 (KAKKLVCNIN…PDASAHFHSL (288 aa)). The short motif at 302 to 308 (PRPPYLP) is the SH3-binding element. The tract at residues 368 to 369 (RR) is important for donor substrate binding. Residues Cys-468 and Cys-475 are joined by a disulfide bond. Residues 505–566 (QNAHNQLAIY…PSYKVKEKIE (62 aa)) form the SH3 domain.

The protein belongs to the glycosyltransferase 23 family.

It is found in the golgi apparatus. It localises to the golgi stack membrane. It catalyses the reaction N(4)-{beta-D-GlcNAc-(1-&gt;2)-alpha-D-Man-(1-&gt;3)-[beta-D-GlcNAc-(1-&gt;2)-alpha-D-Man-(1-&gt;6)]-beta-D-Man-(1-&gt;4)-beta-D-GlcNAc-(1-&gt;4)-beta-D-GlcNAc}-L-asparaginyl-[protein] + GDP-beta-L-fucose = an N(4)-{beta-D-GlcNAc-(1-&gt;2)-alpha-D-Man-(1-&gt;3)-[beta-D-GlcNAc-(1-&gt;2)-alpha-D-Man-(1-&gt;6)]-beta-D-Man-(1-&gt;4)-beta-D-GlcNAc-(1-&gt;4)-[alpha-L-Fuc-(1-&gt;6)]-beta-D-GlcNAc}-L-asparaginyl-[protein] + GDP + H(+). The protein operates within protein modification; protein glycosylation. Functionally, catalyzes the addition of fucose in alpha 1-6 linkage to the first GlcNAc residue, next to the peptide chains in N-glycans. This chain is Alpha-(1,6)-fucosyltransferase (fut8), found in Xenopus tropicalis (Western clawed frog).